The following is a 314-amino-acid chain: 2-dehydro-3-deoxygluconokinase (314 aa).

Substrate-binding positions include 28–32 (GDTLN), Tyr-88, 102–104 (YWR), and Arg-170. ATP contacts are provided by residues 168-170 (NYR), 228-233 (KCGKNG), and 260-263 (SAGD). Asp-263 contacts substrate. Residue Asp-263 is the Proton acceptor of the active site.

Belongs to the carbohydrate kinase PfkB family.

The enzyme catalyses 2-dehydro-3-deoxy-D-gluconate + ATP = 2-dehydro-3-deoxy-6-phospho-D-gluconate + ADP + H(+). The protein operates within carbohydrate acid metabolism; 2-dehydro-3-deoxy-D-gluconate degradation; D-glyceraldehyde 3-phosphate and pyruvate from 2-dehydro-3-deoxy-D-gluconate: step 1/2. Its function is as follows. Catalyzes the phosphorylation of 2-keto-3-deoxygluconate (KDG) to produce 2-keto-3-deoxy-6-phosphogluconate (KDPG). The chain is 2-dehydro-3-deoxygluconokinase (kdgK) from Haemophilus influenzae (strain ATCC 51907 / DSM 11121 / KW20 / Rd).